The chain runs to 132 residues: MAKKIAAKKVTKKRVKKNVDRGQAHIQSSFNNTIVTLTDAEGNALSWASAGGLGFRGSRKSTPYAAQMAAETAAKAALVHGLKTVEVMVKGPGSGREAAIRALQACGIEVTSIKDVTPVPHNGCRPPKRRRV.

This sequence belongs to the universal ribosomal protein uS11 family. In terms of assembly, part of the 30S ribosomal subunit. Interacts with proteins S7 and S18. Binds to IF-3.

Its function is as follows. Located on the platform of the 30S subunit, it bridges several disparate RNA helices of the 16S rRNA. Forms part of the Shine-Dalgarno cleft in the 70S ribosome. In Lachnoclostridium phytofermentans (strain ATCC 700394 / DSM 18823 / ISDg) (Clostridium phytofermentans), this protein is Small ribosomal subunit protein uS11.